The sequence spans 297 residues: Ribosomal RNA small subunit methyltransferase H (297 aa).

S-adenosyl-L-methionine-binding positions include 35–37 (GGH), D55, F82, D100, and Q107.

It belongs to the methyltransferase superfamily. RsmH family.

It is found in the cytoplasm. The enzyme catalyses cytidine(1402) in 16S rRNA + S-adenosyl-L-methionine = N(4)-methylcytidine(1402) in 16S rRNA + S-adenosyl-L-homocysteine + H(+). Functionally, specifically methylates the N4 position of cytidine in position 1402 (C1402) of 16S rRNA. This chain is Ribosomal RNA small subunit methyltransferase H, found in Chlamydia caviae (strain ATCC VR-813 / DSM 19441 / 03DC25 / GPIC) (Chlamydophila caviae).